A 195-amino-acid polypeptide reads, in one-letter code: Protein GrpE (195 aa).

Basic and acidic residues predominate over residues 1–20; that stretch reads MSSKEQKTPDEQVLDQKEAA. The interval 1–40 is disordered; it reads MSSKEQKTPDEQVLDQKEAAKGQQADAAPETADVADPRDE.

It belongs to the GrpE family. As to quaternary structure, homodimer.

The protein resides in the cytoplasm. Participates actively in the response to hyperosmotic and heat shock by preventing the aggregation of stress-denatured proteins, in association with DnaK and GrpE. It is the nucleotide exchange factor for DnaK and may function as a thermosensor. Unfolded proteins bind initially to DnaJ; upon interaction with the DnaJ-bound protein, DnaK hydrolyzes its bound ATP, resulting in the formation of a stable complex. GrpE releases ADP from DnaK; ATP binding to DnaK triggers the release of the substrate protein, thus completing the reaction cycle. Several rounds of ATP-dependent interactions between DnaJ, DnaK and GrpE are required for fully efficient folding. This is Protein GrpE from Pectobacterium atrosepticum (strain SCRI 1043 / ATCC BAA-672) (Erwinia carotovora subsp. atroseptica).